The following is a 60-amino-acid chain: MKSVCGVLIILVVLTTMLSISTFSTVGAEGDCPISEAIKCVEKCKEKVEVCEPGVCKCSG.

Residues 1–28 (MKSVCGVLIILVVLTTMLSISTFSTVGA) form the signal peptide. 3 disulfides stabilise this stretch: Cys32–Cys51, Cys40–Cys56, and Cys44–Cys58.

The protein belongs to the short scorpion toxin superfamily. Potassium channel inhibitor family. Alpha-KTx 29 subfamily. In terms of tissue distribution, expressed by the venom gland.

It is found in the secreted. Weakly inhibits the Kv1.3/KCNA3 channel (1 uM of the toxin inhibits currents by 13.2%) and Kv7.1/KCNQ1 channel (10 uM of the toxin inhibits currents by 27.7%). This chain is Potassium channel toxin alpha-KTx 29.1, found in Lychas mucronatus (Chinese swimming scorpion).